Consider the following 206-residue polypeptide: uncharacterized protein (206 aa).

A signal peptide spans 1-18 (MKTYSLLLGLFISFGVLA).

This is an uncharacterized protein from Haemophilus influenzae (strain ATCC 51907 / DSM 11121 / KW20 / Rd).